A 604-amino-acid polypeptide reads, in one-letter code: Glutamine--fructose-6-phosphate aminotransferase [isomerizing] (604 aa).

Cysteine 2 functions as the Nucleophile; for GATase activity in the catalytic mechanism. The Glutamine amidotransferase type-2 domain occupies cysteine 2–aspartate 218. 2 SIS domains span residues isoleucine 284 to lysine 423 and valine 456 to proline 594. Catalysis depends on lysine 599, which acts as the For Fru-6P isomerization activity.

Homodimer.

The protein resides in the cytoplasm. It catalyses the reaction D-fructose 6-phosphate + L-glutamine = D-glucosamine 6-phosphate + L-glutamate. Functionally, catalyzes the first step in hexosamine metabolism, converting fructose-6P into glucosamine-6P using glutamine as a nitrogen source. This chain is Glutamine--fructose-6-phosphate aminotransferase [isomerizing], found in Streptococcus mutans serotype c (strain ATCC 700610 / UA159).